The chain runs to 901 residues: HTH-type transcriptional regulator MalT (901 aa).

39–46 (SPAGYGKT) lines the ATP pocket. Residues 829-894 (ELIRTSPLTQ…AAVQHAQKLL (66 aa)) form the HTH luxR-type domain. Positions 853–872 (NEQIAGELEVAATTIKTHIR) form a DNA-binding region, H-T-H motif.

This sequence belongs to the MalT family. Monomer in solution. Oligomerizes to an active state in the presence of the positive effectors ATP and maltotriose.

With respect to regulation, activated by ATP and maltotriose, which are both required for DNA binding. Positively regulates the transcription of the maltose regulon whose gene products are responsible for uptake and catabolism of malto-oligosaccharides. Specifically binds to the promoter region of its target genes, recognizing a short DNA motif called the MalT box. The sequence is that of HTH-type transcriptional regulator MalT from Escherichia coli O6:K15:H31 (strain 536 / UPEC).